Reading from the N-terminus, the 282-residue chain is MATYLIGDVHGCYDELIALLHKVEFTPGKDTLWLTGDLVARGPGSLDVLRYVKSLGDSVRLVLGNHDLHLLAVFAGISRNKPKDRLTPLLEAPDADELLNWLRRQPLLQIDEEKKLVMAHAGITPQWDLQTAKECARDVEAVLSSDSYPFFLDAMYGDMPNNWSPELRGLGRLRFITNAFTRMRFCFPNGQLDMYSKESPEEAPAPLKPWFAIPGPVAEEYNIAFGHWASLEGKGTPEGIYALDTGCCWGGTLTCLRWEDKQYFVQPSNRHKDMGEGEAVAS.

Belongs to the Ap4A hydrolase family.

It carries out the reaction P(1),P(4)-bis(5'-adenosyl) tetraphosphate + H2O = 2 ADP + 2 H(+). Functionally, hydrolyzes diadenosine 5',5'''-P1,P4-tetraphosphate to yield ADP. This chain is Bis(5'-nucleosyl)-tetraphosphatase, symmetrical, found in Escherichia coli O127:H6 (strain E2348/69 / EPEC).